Consider the following 424-residue polypeptide: D-inositol 3-phosphate glycosyltransferase (424 aa).

Residue histidine 20 coordinates 1D-myo-inositol 3-phosphate. UDP-N-acetyl-alpha-D-glucosamine is bound by residues 26 to 27 (QP) and glycine 34. 1D-myo-inositol 3-phosphate contacts are provided by residues 31–36 (DAGGMN), lysine 89, tyrosine 122, threonine 146, and arginine 166. 3 residues coordinate UDP-N-acetyl-alpha-D-glucosamine: arginine 240, lysine 245, and methionine 306. Mg(2+)-binding residues include tyrosine 315, arginine 316, and alanine 318. Positions 328 and 336 each coordinate UDP-N-acetyl-alpha-D-glucosamine. Threonine 342 contacts Mg(2+).

This sequence belongs to the glycosyltransferase group 1 family. MshA subfamily. As to quaternary structure, homodimer.

The enzyme catalyses 1D-myo-inositol 3-phosphate + UDP-N-acetyl-alpha-D-glucosamine = 1D-myo-inositol 2-acetamido-2-deoxy-alpha-D-glucopyranoside 3-phosphate + UDP + H(+). Its function is as follows. Catalyzes the transfer of a N-acetyl-glucosamine moiety to 1D-myo-inositol 3-phosphate to produce 1D-myo-inositol 2-acetamido-2-deoxy-glucopyranoside 3-phosphate in the mycothiol biosynthesis pathway. The chain is D-inositol 3-phosphate glycosyltransferase from Kribbella flavida (strain DSM 17836 / JCM 10339 / NBRC 14399).